We begin with the raw amino-acid sequence, 770 residues long: NAD-dependent malic enzyme (770 aa).

Residues 1–440 (MNTGDKAKSQ…KLNRFVFRSG (440 aa)) are malic enzyme. Lys107 functions as the Proton acceptor in the catalytic mechanism. 2 residues coordinate a divalent metal cation: Glu149 and Asp150. The NAD(+) site is built by Asp175 and Asn300. The interval 441–770 (FIMKPVFAAA…LAVVESSHPV (330 aa)) is phosphate acetyltransferase.

It in the N-terminal section; belongs to the malic enzymes family. In the C-terminal section; belongs to the phosphate acetyltransferase and butyryltransferase family. As to quaternary structure, homooctamer. It depends on Mg(2+) as a cofactor. Requires Mn(2+) as cofactor.

It catalyses the reaction (S)-malate + NAD(+) = pyruvate + CO2 + NADH. With respect to regulation, subject to substrate inhibition and shows allosteric regulation by acetyl-CoA. Its function is as follows. Required for symbiotic nitrogen fixation. Plays a key role in the conversion of malate to acetyl-CoA for efficient tricarboxylic acid cycle function in nitrogen-fixating bacteria. This Rhizobium meliloti (strain 1021) (Ensifer meliloti) protein is NAD-dependent malic enzyme (dme).